A 416-amino-acid chain; its full sequence is Lysosome-associated membrane glycoprotein 3 (416 aa).

Positions 1–27 are cleaved as a signal peptide; sequence MPRQLSAAAALFASLAVILHDGSQMRA. Residues 28–381 are Lumenal-facing; the sequence is KAFPETRDYS…NVDECSSDYT (354 aa). Residues N112, N158, N164, N200, N232, N266, and N291 are each glycosylated (N-linked (GlcNAc...) asparagine). 2 disordered regions span residues 136–167 and 179–219; these read PTIT…NQTT and STTG…LAPQ. The span at 143 to 160 shows a compositional bias: low complexity; sequence HTTGTSSSTVSHTTGNTT. A compositionally biased stretch (low complexity) spans 188 to 208; the sequence is PTHAPGTTAAAHNTTRTAAPA. C237 and C274 form a disulfide bridge. A disulfide bridge connects residues C339 and C376. Residues 382 to 402 traverse the membrane as a helical segment; it reads IVLPVIGAIVVGLCLMGMGVY. Residues 403–416 are Cytoplasmic-facing; that stretch reads KIRLRCQSSGYQRI.

It belongs to the LAMP family. Monomer. Interacts with FURIN. In terms of assembly, (Microbial infection) Interacts with mumps virus protein F; this interaction promotes protein F cleavage by FURIN. As to expression, detected in tonsil interdigitating dendritic cells, in spleen, lymph node, Peyer's patches in the small instestine, in thymus medulla and in B-cells (at protein level). Expressed in lymphoid organs and dendritic cells. Expressed in lung. Up-regulated in carcinomas of the esophagus, colon, rectum, ureter, stomach, breast, fallopian tube, thyroid and parotid tissues.

It is found in the cell surface. Its subcellular location is the lysosome membrane. The protein resides in the cytoplasmic vesicle membrane. It localises to the early endosome membrane. In terms of biological role, lysosomal membrane glycoprotein which plays a role in the unfolded protein response (UPR) that contributes to protein degradation and cell survival during proteasomal dysfunction. Plays a role in the process of fusion of the lysosome with the autophagosome, thereby modulating the autophagic process. Promotes hepatocellular lipogenesis through activation of the PI3K/Akt pathway. May also play a role in dendritic cell function and in adaptive immunity. (Microbial infection) Plays a positive role in post-entry steps of influenza A virus replication, either virus uncoating, cytosolic transport, or nuclear import of viral components, and promotes nuclear accumulation of influenza nucleoprotein/NP at early stages of viral infection. Its function is as follows. (Microbial infection) Supports the FURIN-mediated cleavage of mumps virus fusion protein F by interacting with both FURIN and the unprocessed form but not the processed form of the viral protein F. Functionally, (Microbial infection) Promotes the intracellular proliferation of Salmonella typhimuium. This chain is Lysosome-associated membrane glycoprotein 3 (LAMP3), found in Homo sapiens (Human).